Consider the following 106-residue polypeptide: uncharacterized protein (106 aa).

The chain crosses the membrane as a helical span at residues 9–27 (ALAALAFTLGLIGLAAWAL). The segment at 84–106 (TPKGPPPASALSPSPVAEPEPVV) is disordered.

This sequence belongs to the FliO/MopB family.

Its subcellular location is the cell membrane. It localises to the bacterial flagellum basal body. This is an uncharacterized protein from Caulobacter vibrioides (strain ATCC 19089 / CIP 103742 / CB 15) (Caulobacter crescentus).